The sequence spans 238 residues: Ribonuclease PH (238 aa).

Phosphate-binding positions include Arg86 and 124–126 (GTR).

Belongs to the RNase PH family. As to quaternary structure, homohexameric ring arranged as a trimer of dimers.

It carries out the reaction tRNA(n+1) + phosphate = tRNA(n) + a ribonucleoside 5'-diphosphate. Phosphorolytic 3'-5' exoribonuclease that plays an important role in tRNA 3'-end maturation. Removes nucleotide residues following the 3'-CCA terminus of tRNAs; can also add nucleotides to the ends of RNA molecules by using nucleoside diphosphates as substrates, but this may not be physiologically important. Probably plays a role in initiation of 16S rRNA degradation (leading to ribosome degradation) during starvation. In Trichlorobacter lovleyi (strain ATCC BAA-1151 / DSM 17278 / SZ) (Geobacter lovleyi), this protein is Ribonuclease PH.